Reading from the N-terminus, the 677-residue chain is MKGEGKVFLKSRMKWIGLLGLVLSAFSLLVHFLLAGFTDDSISDYSIPVTIFSWRPIFDNPRFARHTPLYRRLWGPTRHVETLLPDANPRGFHSDPPARTNGFVFVRIQGGFHEIRNSIPDVVAVSRLLNATLVIPEIQSTTSSKGISSQFKSFAYLYNEEHFMATIANDVRVVKTLPKNLKWARRKKQIPSFKVSYGSSPYYYLHHVLPVLIKHSVVELVVPHGGCLQAILPSDLEEYQRLRCRVAFHGLQFRKEVQELSTKVLQRLRPLGRPFIAYDPGMTREALAYHGCAELFQDVHTELIQHKRAWMIKRGIVKGKLSVDSAEQRLAGLCPLMPEEVGILLRAYGYSWDTIIYVAGGEVFGGQRTLIPLHGMFENVVDRTSLSTSWELAKMYGREAKHNDIKKMTPPSIEVETKHDSLKSTRQRPQPLPPPPARPKYYNIEGWWGWVAESDNEPESTVIELRTNAHKLLWEAIDYVVSVEADVFISGFDRDGKGHPSFASLVMGHRLYQSASAKTFRPDRKQIAMLLEEIRDHMYEANHTWITSVRKLLKRSILEGLMESSKRSKAFSFLSHPVPECSCITRTHPVSNATNLGVTHRCPQWVDGAVSERLKEYKNAEKEEDLDEEDLSSSGLFFGHKESGGNNNGNNETVNSEANNKEEGQLEDQEELEGSER.

The chain crosses the membrane as a helical; Signal-anchor for type II membrane protein span at residues 15 to 35 (WIGLLGLVLSAFSLLVHFLLA). N130 carries an N-linked (GlcNAc...) asparagine glycan. Residues 410 to 437 (PPSIEVETKHDSLKSTRQRPQPLPPPPA) form a disordered region. 2 N-linked (GlcNAc...) asparagine glycosylation sites follow: N542 and N592. The disordered stretch occupies residues 619 to 677 (NAEKEEDLDEEDLSSSGLFFGHKESGGNNNGNNETVNSEANNKEEGQLEDQEELEGSER). Residues 622 to 631 (KEEDLDEEDL) are compositionally biased toward acidic residues. Positions 644 to 658 (GGNNNGNNETVNSEA) are enriched in low complexity. N651 is a glycosylation site (N-linked (GlcNAc...) asparagine). A compositionally biased stretch (acidic residues) spans 665–677 (QLEDQEELEGSER).

Belongs to the glycosyltransferase GT106 family.

It is found in the membrane. Its pathway is glycan metabolism. This chain is O-fucosyltransferase 27, found in Arabidopsis thaliana (Mouse-ear cress).